Consider the following 82-residue polypeptide: Sulfur carrier protein TusA (82 aa).

Cysteine 17 acts as the Cysteine persulfide intermediate in catalysis.

The protein belongs to the sulfur carrier protein TusA family.

It localises to the cytoplasm. Sulfur carrier protein which probably makes part of a sulfur-relay system. This chain is Sulfur carrier protein TusA, found in Glaesserella parasuis serovar 5 (strain SH0165) (Haemophilus parasuis).